A 751-amino-acid chain; its full sequence is Catalase-peroxidase (751 aa).

The disordered stretch occupies residues 1 to 21; that stretch reads MSNESKCPFHQTAGGGTTNRD. The segment at residues 90–244 is a cross-link (tryptophyl-tyrosyl-methioninium (Trp-Tyr) (with M-270)); sequence WHSAGTYRIG…LAAVQMGLIY (155 aa). Histidine 91 (proton acceptor) is an active-site residue. Positions 195 to 227 are disordered; that stretch reads YGKDQVKAQPPGQGDLVAEPAKHGEEQNRDLSA. The segment covering 214-227 has biased composition (basic and acidic residues); the sequence is PAKHGEEQNRDLSA. Positions 244–270 form a cross-link, tryptophyl-tyrosyl-methioninium (Tyr-Met) (with W-90); it reads YVNPEGPEGNPDPVASGKDIRETFGRM. A heme b-binding site is contributed by histidine 285. The interval 364 to 385 is disordered; it reads GAHQWRPKDGKGAGTVPDAHDP.

The protein belongs to the peroxidase family. Peroxidase/catalase subfamily. In terms of assembly, homodimer or homotetramer. Requires heme b as cofactor. Post-translationally, formation of the three residue Trp-Tyr-Met cross-link is important for the catalase, but not the peroxidase activity of the enzyme.

The enzyme catalyses H2O2 + AH2 = A + 2 H2O. It carries out the reaction 2 H2O2 = O2 + 2 H2O. Bifunctional enzyme with both catalase and broad-spectrum peroxidase activity. This chain is Catalase-peroxidase, found in Pseudomonas putida (strain ATCC 47054 / DSM 6125 / CFBP 8728 / NCIMB 11950 / KT2440).